A 137-amino-acid polypeptide reads, in one-letter code: Secreted RxLR effector protein 67 (137 aa).

An N-terminal signal peptide occupies residues 1–18; the sequence is MRLYILVLAAIAVTLVFA. The short motif at 32 to 61 is the RxLR-dEER element; sequence RALRQASITDEKSDDSLNAQAPPLSKSEKR. The disordered stretch occupies residues 40-65; the sequence is TDEKSDDSLNAQAPPLSKSEKRLSRS. A helical membrane pass occupies residues 114-134; the sequence is WFVRMILEAGIFWAVFHCLSA.

It belongs to the RxLR effector family.

The protein resides in the secreted. It localises to the host cytoplasm. It is found in the host nucleus. Its subcellular location is the membrane. Its function is as follows. Effector that partially suppresses the tobacco programmed cell death induced by cell death-inducing proteins. The chain is Secreted RxLR effector protein 67 from Plasmopara viticola (Downy mildew of grapevine).